The sequence spans 287 residues: Probable F-box protein At5g04010 (287 aa).

In terms of domain architecture, F-box; degenerate spans 50-101; the sequence is PSPPSWEILCLVGPYMDPESLAVASCVSTTWSKCFSSEDLWKSLPATRHSIF.

The protein is Probable F-box protein At5g04010 (NSFBx) of Arabidopsis thaliana (Mouse-ear cress).